We begin with the raw amino-acid sequence, 144 residues long: Large ribosomal subunit protein uL15 (144 aa).

Residues 1-56 (MELNNLKPAAGAKHAKRRVGRGIGSGLGKTAGRGHKGQKSRSGGFHKVGFEGGQMP) are disordered. The span at 21–31 (RGIGSGLGKTA) shows a compositional bias: gly residues.

It belongs to the universal ribosomal protein uL15 family. Part of the 50S ribosomal subunit.

Its function is as follows. Binds to the 23S rRNA. The protein is Large ribosomal subunit protein uL15 of Burkholderia ambifaria (strain MC40-6).